Consider the following 905-residue polypeptide: Protein LONGIFOLIA 2 (905 aa).

Disordered stretches follow at residues 42–136 (VSGG…GGLM), 232–268 (RLSL…RSSS), 285–315 (DTEQ…SRSV), 432–585 (STSP…SDSN), 606–626 (CDFP…IKQD), and 690–711 (VPFP…ECSP). Positions 65–74 (ESDKETERSS) are enriched in basic and acidic residues. Residues 90–117 (FESSSRPSFSSSPRSSSFSSAEVSTTAS) are compositionally biased toward low complexity. Residues 286–296 (TEQRRENRFCD) are compositionally biased toward basic and acidic residues. Polar residues-rich tracts occupy residues 432 to 461 (STSP…SGKQ), 477 to 487 (LDSTKSNSPKT), and 501 to 516 (MTKS…SPRT). A compositionally biased stretch (basic and acidic residues) spans 566-581 (PDDRLSDARSDLRSLR).

In terms of assembly, interacts (via C-terminus) with TON1A and TON1B.

It is found in the cytoplasm. The protein resides in the cytoskeleton. Functionally, in association with LNG1, regulates leaf morphology by promoting longitudinal polar cell elongation independently of ROT3. Associates with microtubules and recruits TON1A and TON1B to the cytoskeleton through its C-terminus. This Arabidopsis thaliana (Mouse-ear cress) protein is Protein LONGIFOLIA 2 (LNG2).